The primary structure comprises 560 residues: Chaperonin GroEL 2 (560 aa).

ATP is bound by residues 29-32 (TLGP), 86-90 (DGTTT), Gly413, 478-480 (NAA), and Asp494.

Belongs to the chaperonin (HSP60) family. In terms of assembly, forms a cylinder of 14 subunits composed of two heptameric rings stacked back-to-back. Interacts with the co-chaperonin GroES.

Its subcellular location is the cytoplasm. It catalyses the reaction ATP + H2O + a folded polypeptide = ADP + phosphate + an unfolded polypeptide.. In terms of biological role, together with its co-chaperonin GroES, plays an essential role in assisting protein folding. The GroEL-GroES system forms a nano-cage that allows encapsulation of the non-native substrate proteins and provides a physical environment optimized to promote and accelerate protein folding. This Trichormus variabilis (strain ATCC 29413 / PCC 7937) (Anabaena variabilis) protein is Chaperonin GroEL 2.